The primary structure comprises 300 residues: MNPHYARLVTLAAVSATAVALVLFIMKVFAWWHTGSVSLLASLVDSLVDIAASLVNLLVVRYSLQPADTEHAFGHGKAESLAALAQSMFISGSALFLILTGLQHSLEPQTLHAPEVGMWVTLIALVATLLLVSFQRWVVKRTHSQAVRADMLHYQSDLLMNGAILVALALSWKGITRADSLFALGIGGYILYSALRMGYDAVQSLLDRALPDDEHRAIAEVIVNWPGIRGAHALRTRRSGPTRFIQLHLEMDDALPLVQAHQIADDLEQALLKRFPGADIIIHQDPVSAVPENQRGRLTA.

4 helical membrane-spanning segments follow: residues 11 to 31, 40 to 60, 81 to 101, and 114 to 134; these read LAAVSATAVALVLFIMKVFAW, LASLVDSLVDIAASLVNLLVV, LAALAQSMFISGSALFLILTG, and PEVGMWVTLIALVATLLLVSF. The Zn(2+) site is built by D45 and D49. The Zn(2+) site is built by H153 and D157. 2 helical membrane passes run 156–176 and 182–202; these read SDLLMNGAILVALALSWKGIT and FALGIGGYILYSALRMGYDAV.

This sequence belongs to the cation diffusion facilitator (CDF) transporter (TC 2.A.4) family. FieF subfamily. Homodimer.

It is found in the cell inner membrane. The enzyme catalyses Zn(2+)(in) + H(+)(out) = Zn(2+)(out) + H(+)(in). The catalysed reaction is Cd(2+)(in) + H(+)(out) = Cd(2+)(out) + H(+)(in). It carries out the reaction Fe(2+)(in) + H(+)(out) = Fe(2+)(out) + H(+)(in). Divalent metal cation transporter which exports Zn(2+), Cd(2+) and possibly Fe(2+). May be involved in zinc and iron detoxification by efflux. The protein is Cation-efflux pump FieF of Pectobacterium carotovorum subsp. carotovorum (strain PC1).